We begin with the raw amino-acid sequence, 166 residues long: Putative 4-hydroxy-4-methyl-2-oxoglutarate aldolase (166 aa).

Substrate is bound by residues 74–77 (GDQI) and Arg-96. Residue Asp-97 participates in a divalent metal cation binding.

This sequence belongs to the class II aldolase/RraA-like family. Homotrimer. Requires a divalent metal cation as cofactor.

It carries out the reaction 4-hydroxy-4-methyl-2-oxoglutarate = 2 pyruvate. The enzyme catalyses oxaloacetate + H(+) = pyruvate + CO2. Its function is as follows. Catalyzes the aldol cleavage of 4-hydroxy-4-methyl-2-oxoglutarate (HMG) into 2 molecules of pyruvate. Also contains a secondary oxaloacetate (OAA) decarboxylase activity due to the common pyruvate enolate transition state formed following C-C bond cleavage in the retro-aldol and decarboxylation reactions. In Xanthomonas campestris pv. campestris (strain 8004), this protein is Putative 4-hydroxy-4-methyl-2-oxoglutarate aldolase.